A 906-amino-acid polypeptide reads, in one-letter code: MLSLVQKIIGSRNERFIKKVSRIVQKINSLEPEFEKLSDEQLKAKTFEYRERLANGEILDNLLPEAFATVREAGKRTKNMRHYDVQLIGGIVLHQGKVAEMRTGEGKTLVATLPAYLNALTGDGVHVITVNDYLAKRDAELMSDIYEFLGMSVGVIVADLNPQQRKEAYACDITYGTNNEFGFDYLRDNMAYEKEQQVQRSRNYVIIDEVDSILIDEARTPLIISGASDDSSEMYNLFNRLVPYLEKQEKEEVENEQEQRDFYVDEKSKNAYLTEKGYAKIENMLKKEGILEEDDNLYSPHNITKMHYLNACLRAHSLYQLNIDYIVRDQEIVIIDESTGRAMPGRRWSDGLHQAIEAKEGVKVNAENQTMASITFQNFFKLYNKIAGMTGTADTEAFELHSIYGLEVIIIPTNKPMIRKDHHDEIYGSVSEKFDAIVEDIKERISKGQPVLVGTASIEASEVLSTLLKKKKIRHNVLNAKQHEKEASIIAMAGYPDNVTIATNMAGRGTDIILGGNLEVEIAQLEDPTPEDIAQIKAEWLKRNEAVKKAGGLCIIGSERHDSRRIDNQLRGRAARQGDPGESKFYLSMDDNLLRIFASQSMAERVKKGLKGGESLAFGFMSKVISKAQGKVESYHFDIRKNLLEYDNVVNTQRKVIYEQRQSFLEAEDVSDILADIRIDVAEQLFHDYVPAGSMHELWDLEGLEKALKSDFMIELDLQKLYEEDDSLGEEDLKRLVREAIEIEFVEKTKNLDSGAVRQFEKFSLLQSLDTHWREHLSSIDHLRNSINLRGYAQKDPKNEYKKEAFELFSTMLDNFKYEVISSLAKIRIATEEETQRAQQEWQESMSDIKAEHESVIDNNQRHDEDEQEEAPKVQQVRREGPKVKRNDPCPCGSGKKYKQCHSKVE.

ATP contacts are provided by residues Gln86, Gly104–Thr108, and Asp511. Composition is skewed to basic and acidic residues over residues His853–Glu865 and Val877–Asp888. The disordered stretch occupies residues His853–Glu906. Cys890, Cys892, Cys901, and His902 together coordinate Zn(2+). Positions Lys896–Glu906 are enriched in basic residues.

It belongs to the SecA family. In terms of assembly, monomer and homodimer. Part of the essential Sec protein translocation apparatus which comprises SecA, SecYEG and auxiliary proteins SecDF-YajC and YidC. Zn(2+) is required as a cofactor.

It localises to the cell inner membrane. It is found in the cytoplasm. The catalysed reaction is ATP + H2O + cellular proteinSide 1 = ADP + phosphate + cellular proteinSide 2.. Functionally, part of the Sec protein translocase complex. Interacts with the SecYEG preprotein conducting channel. Has a central role in coupling the hydrolysis of ATP to the transfer of proteins into and across the cell membrane, serving both as a receptor for the preprotein-SecB complex and as an ATP-driven molecular motor driving the stepwise translocation of polypeptide chains across the membrane. The protein is Protein translocase subunit SecA of Francisella tularensis subsp. tularensis (strain WY96-3418).